The sequence spans 815 residues: BTB/POZ domain-containing protein KCTD3 (815 aa).

Residues 18–87 (EIVQLNVGGT…LRTKELDLRG (70 aa)) enclose the BTB domain. The segment covering 139–168 (INNTVRSADSRNGLNSTEGEARGNGTQPVL) has biased composition (polar residues). Residues 139-170 (INNTVRSADSRNGLNSTEGEARGNGTQPVLSG) form a disordered region. WD repeat units lie at residues 174–218 (ETVR…GWQQ), 224–263 (YLDW…LWSV), 270–305 (SEIG…VWNA), 310–342 (WQVQ…YIDM), 354–404 (LLVT…VQHP), 412–449 (QLFQ…TWTV), 457–504 (STQP…IQKV), and 510–569 (KLFV…MWDL). The interaction with HCN3 stretch occupies residues 512-815 (FVRLSSTGKR…SDSSGQEYSL (304 aa)). Serine 604, serine 664, and serine 711 each carry phosphoserine. Residues 736 to 758 (SESKKRSSEDENENKIEFRKKGG) show a composition bias toward basic and acidic residues. The segment at 736-815 (SESKKRSSED…SDSSGQEYSL (80 aa)) is disordered. The span at 774-800 (ASSPSTSDGGTDSPGTASPSPTKTTPS) shows a compositional bias: low complexity. Serine 793 is subject to Phosphoserine.

It belongs to the KCTD3 family. In terms of assembly, interacts with HCN3. In terms of tissue distribution, broadly expressed in normal tissues.

The protein resides in the cell membrane. Its function is as follows. Accessory subunit of potassium/sodium hyperpolarization-activated cyclic nucleotide-gated channel 3 (HCN3) up-regulating its cell-surface expression and current density without affecting its voltage dependence and kinetics. The chain is BTB/POZ domain-containing protein KCTD3 (KCTD3) from Homo sapiens (Human).